The following is a 276-amino-acid chain: Large ribosomal subunit protein uL2 (276 aa).

The interval 212-276 (NRHRGIRPQT…KLIISRKKHK (65 aa)) is disordered. Basic residues predominate over residues 257–276 (YKTRKKKASDKLIISRKKHK).

This sequence belongs to the universal ribosomal protein uL2 family. In terms of assembly, part of the 50S ribosomal subunit. Forms a bridge to the 30S subunit in the 70S ribosome.

In terms of biological role, one of the primary rRNA binding proteins. Required for association of the 30S and 50S subunits to form the 70S ribosome, for tRNA binding and peptide bond formation. It has been suggested to have peptidyltransferase activity; this is somewhat controversial. Makes several contacts with the 16S rRNA in the 70S ribosome. This Helicobacter pylori (strain P12) protein is Large ribosomal subunit protein uL2.